Consider the following 303-residue polypeptide: Protoheme IX farnesyltransferase (303 aa).

Helical transmembrane passes span 25–45 (MGLV…AVVM), 54–74 (IPQI…ACAL), 104–124 (LLLL…LLNI), 125–145 (PSGV…SIWS), 151–171 (WNTV…WVAI), 179–199 (AIAL…ALAI), 227–247 (FIWL…GVVF), 248–268 (VVLA…TFKK), and 280–300 (FIYS…VSLL).

Belongs to the UbiA prenyltransferase family. Protoheme IX farnesyltransferase subfamily. Interacts with CtaA.

It localises to the cell membrane. It carries out the reaction heme b + (2E,6E)-farnesyl diphosphate + H2O = Fe(II)-heme o + diphosphate. It participates in porphyrin-containing compound metabolism; heme O biosynthesis; heme O from protoheme: step 1/1. Converts heme B (protoheme IX) to heme O by substitution of the vinyl group on carbon 2 of heme B porphyrin ring with a hydroxyethyl farnesyl side group. The sequence is that of Protoheme IX farnesyltransferase from Staphylococcus aureus (strain Mu3 / ATCC 700698).